Consider the following 171-residue polypeptide: Protein phosphatase 1 regulatory subunit 1A (171 aa).

An N-acetylmethionine modification is found at M1. The tract at residues 1 to 171 (MEPDNSPRKI…PLDSQGASLV (171 aa)) is disordered. Residues 9-12 (KIQF) are essential for activity. Residues 19-29 (PHLDPEAAEQI) show a composition bias toward basic and acidic residues. At T35 the chain carries Phosphothreonine. An essential for activity region spans residues 42–54 (TSDQSSPEIDEDR). A phosphoserine mark is found at S43, S46, S47, and S67. Residues 122-146 (GSASRPDTPGTAQKSAESNPKTQEQ) are compositionally biased toward polar residues. Residues 143 to 171 (TQEQCGVEPRTEDSSAHMLPLDSQGASLV) form an interaction with PPP1R15A region.

The protein belongs to the protein phosphatase inhibitor 1 family. As to quaternary structure, interacts with PPP1R15A. In terms of processing, phosphorylation of Thr-35 is required for activity.

Functionally, inhibitor of protein-phosphatase 1. This protein may be important in hormonal control of glycogen metabolism. Hormones that elevate intracellular cAMP increase I-1 activity in many tissues. I-1 activation may impose cAMP control over proteins that are not directly phosphorylated by PKA. Following a rise in intracellular calcium, I-1 is inactivated by calcineurin (or PP2B). Does not inhibit type-2 phosphatases. This chain is Protein phosphatase 1 regulatory subunit 1A (Ppp1r1a), found in Mus musculus (Mouse).